The chain runs to 75 residues: DNA-directed RNA polymerase subunit omega (75 aa).

This sequence belongs to the RNA polymerase subunit omega family. In terms of assembly, in cyanobacteria the RNAP catalytic core is composed of 2 alpha, 1 beta, 1 beta', 1 gamma and 1 omega subunit. When a sigma factor is associated with the core the holoenzyme is formed, which can initiate transcription.

It carries out the reaction RNA(n) + a ribonucleoside 5'-triphosphate = RNA(n+1) + diphosphate. Promotes RNA polymerase assembly. Latches the N- and C-terminal regions of the beta' subunit thereby facilitating its interaction with the beta and alpha subunits. The protein is DNA-directed RNA polymerase subunit omega of Microcystis aeruginosa (strain NIES-843 / IAM M-2473).